The primary structure comprises 714 residues: Fatty acid oxidation complex subunit alpha (714 aa).

Positions 1 to 190 are enoyl-CoA hydratase; the sequence is MEMASAFTLN…KLGLVDDVVP (190 aa). The 3-hydroxyacyl-CoA dehydrogenase stretch occupies residues 306-714; it reads APLNSVGILG…FWKTTATDLQ (409 aa).

This sequence in the N-terminal section; belongs to the enoyl-CoA hydratase/isomerase family. In the central section; belongs to the 3-hydroxyacyl-CoA dehydrogenase family. Heterotetramer of two alpha chains (FadJ) and two beta chains (FadI).

The protein localises to the cytoplasm. The catalysed reaction is a (3S)-3-hydroxyacyl-CoA = a (2E)-enoyl-CoA + H2O. The enzyme catalyses a 4-saturated-(3S)-3-hydroxyacyl-CoA = a (3E)-enoyl-CoA + H2O. It catalyses the reaction a (3S)-3-hydroxyacyl-CoA + NAD(+) = a 3-oxoacyl-CoA + NADH + H(+). It carries out the reaction (3S)-3-hydroxybutanoyl-CoA = (3R)-3-hydroxybutanoyl-CoA. It functions in the pathway lipid metabolism; fatty acid beta-oxidation. Its function is as follows. Catalyzes the formation of a hydroxyacyl-CoA by addition of water on enoyl-CoA. Also exhibits 3-hydroxyacyl-CoA epimerase and 3-hydroxyacyl-CoA dehydrogenase activities. The chain is Fatty acid oxidation complex subunit alpha from Escherichia coli (strain ATCC 8739 / DSM 1576 / NBRC 3972 / NCIMB 8545 / WDCM 00012 / Crooks).